The following is a 328-amino-acid chain: 3,4-dihydroxyphenylacetaldehyde synthase 2 (328 aa).

Residue Asn-111 is part of the active site. Residue Lys-222 is modified to N6-(pyridoxal phosphate)lysine.

Belongs to the group II decarboxylase family. The cofactor is pyridoxal 5'-phosphate.

It carries out the reaction L-dopa + O2 + H2O + H(+) = 3,4-dihydroxyphenylacetaldehyde + H2O2 + NH4(+) + CO2. Functionally, catalyzes the decarboxylation-oxidative deamination of L-3,4-dihydroxyphenylalanine (L-DOPA) to 3,4-dihydroxylphenylacetaldehyde (DHPAA). Involved in cuticle development. Probably responsible for the protein cross-linking during the development of flexible cuticles. The protein is 3,4-dihydroxyphenylacetaldehyde synthase 2 (amd) of Drosophila simulans (Fruit fly).